The following is a 434-amino-acid chain: Protein translocase subunit SecY (434 aa).

10 helical membrane-spanning segments follow: residues 19–39, 73–93, 117–137, 148–168, 179–199, 209–229, 264–284, 300–320, 362–382, and 391–411; these read LFTL…IPGI, IFML…LLVY, YLTI…AKGI, YIFV…WFGE, TSLI…FNLF, VNPV…ILII, VLPV…LSGF, PNGF…TYFY, FSGS…QNIF, and IMGG…LIHI.

The protein belongs to the SecY/SEC61-alpha family. In terms of assembly, component of the Sec protein translocase complex. Heterotrimer consisting of SecY, SecE and SecG subunits. The heterotrimers can form oligomers, although 1 heterotrimer is thought to be able to translocate proteins. Interacts with the ribosome. Interacts with SecDF, and other proteins may be involved. Interacts with SecA.

It localises to the cell inner membrane. In terms of biological role, the central subunit of the protein translocation channel SecYEG. Consists of two halves formed by TMs 1-5 and 6-10. These two domains form a lateral gate at the front which open onto the bilayer between TMs 2 and 7, and are clamped together by SecE at the back. The channel is closed by both a pore ring composed of hydrophobic SecY resides and a short helix (helix 2A) on the extracellular side of the membrane which forms a plug. The plug probably moves laterally to allow the channel to open. The ring and the pore may move independently. This Borreliella burgdorferi (strain ATCC 35210 / DSM 4680 / CIP 102532 / B31) (Borrelia burgdorferi) protein is Protein translocase subunit SecY.